Here is a 561-residue protein sequence, read N- to C-terminus: Bifunctional NAD(P)H-hydrate repair enzyme (561 aa).

The segment at 1 to 241 (MLSRISERCT…WMIAAERMDA (241 aa)) is NAD(P)H-hydrate epimerase. The 207-residue stretch at 29-235 (LRDAEPAAAA…SLGLEEWMIA (207 aa)) folds into the YjeF N-terminal domain. The tract at residues 77 to 81 (NNGGD) is NADPHX 1; for epimerase activity. K(+) contacts are provided by asparagine 78 and aspartate 145. The tract at residues 149–155 (GTGISGP) is NADPHX 1; for epimerase activity. (6S)-NADPHX-binding residues include tyrosine 160 and aspartate 178. Serine 181 provides a ligand contact to K(+). One can recognise a YjeF C-terminal domain in the interval 249 to 548 (LGDVYGYFST…PRIPFIVNAS (300 aa)). Residues 249–561 (LGDVYGYFST…SATQQRPSGL (313 aa)) form an ADP-dependent (S)-NAD(P)H-hydrate dehydratase region. Residue glycine 351 coordinates (6S)-NADPHX. The NADPHX 2; for dehydratase activity stretch occupies residues 417–423 (HPGEAAR). Residues 454 to 458 (KGPGT) and 475 to 484 (NAGMASGGMG) each bind ADP. (6S)-NADPHX is bound at residue aspartate 485.

In the N-terminal section; belongs to the NnrE/AIBP family. This sequence in the C-terminal section; belongs to the NnrD/CARKD family. K(+) serves as cofactor.

It catalyses the reaction (6S)-NADHX + ADP = AMP + phosphate + NADH + H(+). It carries out the reaction (6S)-NADPHX + ADP = AMP + phosphate + NADPH + H(+). The enzyme catalyses (6R)-NADHX = (6S)-NADHX. The catalysed reaction is (6R)-NADPHX = (6S)-NADPHX. Functionally, bifunctional enzyme that catalyzes the epimerization of the S- and R-forms of NAD(P)HX and the dehydration of the S-form of NAD(P)HX at the expense of ADP, which is converted to AMP. This allows the repair of both epimers of NAD(P)HX, a damaged form of NAD(P)H that is a result of enzymatic or heat-dependent hydration. In Leishmania braziliensis, this protein is Bifunctional NAD(P)H-hydrate repair enzyme.